A 201-amino-acid chain; its full sequence is Holliday junction branch migration complex subunit RuvA (201 aa).

Residues 1 to 63 (MYDYIKGTVT…EDNISLFGFQ (63 aa)) form a domain I region. The segment at 64–142 (TTEERYLFKK…DVVASEIVYV (79 aa)) is domain II. Residues 143-153 (APENDMVAGLS) are flexible linker. The segment at 153–201 (SPQLEEAVLALEALGYSTRELKKVIPKLAKEEDLTSDAYIKLALQLMTK) is domain III.

It belongs to the RuvA family. Homotetramer. Forms an RuvA(8)-RuvB(12)-Holliday junction (HJ) complex. HJ DNA is sandwiched between 2 RuvA tetramers; dsDNA enters through RuvA and exits via RuvB. An RuvB hexamer assembles on each DNA strand where it exits the tetramer. Each RuvB hexamer is contacted by two RuvA subunits (via domain III) on 2 adjacent RuvB subunits; this complex drives branch migration. In the full resolvosome a probable DNA-RuvA(4)-RuvB(12)-RuvC(2) complex forms which resolves the HJ.

It localises to the cytoplasm. Its function is as follows. The RuvA-RuvB-RuvC complex processes Holliday junction (HJ) DNA during genetic recombination and DNA repair, while the RuvA-RuvB complex plays an important role in the rescue of blocked DNA replication forks via replication fork reversal (RFR). RuvA specifically binds to HJ cruciform DNA, conferring on it an open structure. The RuvB hexamer acts as an ATP-dependent pump, pulling dsDNA into and through the RuvAB complex. HJ branch migration allows RuvC to scan DNA until it finds its consensus sequence, where it cleaves and resolves the cruciform DNA. In Listeria monocytogenes serotype 4a (strain HCC23), this protein is Holliday junction branch migration complex subunit RuvA.